Consider the following 231-residue polypeptide: Probable glutathione S-transferase GSTU1 (231 aa).

The GST N-terminal domain maps to 5–84 (KELVLLDFWV…YLDDAFPGTP (80 aa)). Glutathione contacts are provided by residues S15, K42, I56, and 68-69 (ES). A GST C-terminal domain is found at 97-220 (AAYARATARF…LPSPEKVYDF (124 aa)).

Belongs to the GST superfamily. Tau family.

It catalyses the reaction RX + glutathione = an S-substituted glutathione + a halide anion + H(+). In terms of biological role, conjugation of reduced glutathione to a wide number of exogenous and endogenous hydrophobic electrophiles. This chain is Probable glutathione S-transferase GSTU1 (GSTU1), found in Oryza sativa subsp. indica (Rice).